The following is a 2357-amino-acid chain: Protein transport protein Sec16A (2357 aa).

Disordered regions lie at residues methionine 1–phenylalanine 25 and phenylalanine 57–arginine 303. Low complexity-rich tracts occupy residues serine 64–proline 76 and glutamine 210–glutamine 227. The segment covering histidine 285–arginine 303 has biased composition (polar residues). Phosphoserine is present on residues serine 296, serine 314, and serine 331. 7 disordered regions span residues asparagine 335–cysteine 359, alanine 508–glutamine 540, lysine 553–phenylalanine 603, valine 758–valine 828, leucine 924–glutamine 987, valine 1006–aspartate 1038, and glutamine 1059–proline 1151. Residues serine 520–serine 536 are compositionally biased toward low complexity. Phosphoserine is present on residues serine 559, serine 569, serine 587, serine 589, and serine 592. Threonine 593 bears the Phosphothreonine mark. Serine 595 bears the Phosphoserine mark. Polar residues-rich tracts occupy residues serine 766–proline 778 and leucine 803–asparagine 825. Positions valine 1006–arginine 1028 are enriched in polar residues. The tract at residues serine 1019–glycine 1890 is required for localization to endoplasmic reticulum exit sites. At serine 1069 the chain carries Phosphoserine. A compositionally biased stretch (polar residues) spans glutamate 1080–alanine 1101. Residues alanine 1101 to histidine 1400 are interaction with MIA3. A required for endoplasmic reticulum localization region spans residues serine 1102–tyrosine 1405. Low complexity predominate over residues glutamine 1118 to glutamine 1131. Residues glutamine 1138 to proline 1151 are compositionally biased toward pro residues. Residues serine 1207, serine 1229, and serine 1305 each carry the phosphoserine modification. A disordered region spans residues tyrosine 1215–glycine 1248. Residues proline 1216–proline 1233 are compositionally biased toward basic and acidic residues. Basic and acidic residues predominate over residues phenylalanine 1307 to proline 1322. The segment at phenylalanine 1307–glutamine 1378 is disordered. Phosphothreonine is present on threonine 1325. A phosphoserine mark is found at serine 1327, serine 1347, serine 1350, serine 1356, serine 1359, serine 1362, serine 1369, serine 1573, and serine 1601. The segment covering aspartate 1333 to alanine 1354 has biased composition (basic and acidic residues). Residues serine 1356 to histidine 1375 are compositionally biased toward low complexity. A central conserved domain (CCD); mediates interaction with RNF183, LRRK2 and SEC13 region spans residues glutamine 1434–glycine 1890. Residue threonine 1907 is modified to Phosphothreonine. Phosphoserine is present on residues serine 1939, serine 1964, serine 2022, and serine 2042. Disordered regions lie at residues lysine 2049 to phenylalanine 2110, valine 2141 to methionine 2181, and asparagine 2226 to tyrosine 2328. Threonine 2054 carries the post-translational modification Phosphothreonine. Phosphoserine occurs at positions 2056, 2073, and 2083. Basic and acidic residues predominate over residues glutamate 2087–glutamate 2106. The segment at glutamate 2106–asparagine 2357 is required for interaction with SEC23A. Residues serine 2271 and serine 2291 each carry the phosphoserine modification. Composition is skewed to low complexity over residues glutamate 2289–glutamate 2302 and alanine 2310–alanine 2324.

This sequence belongs to the SEC16 family. In terms of assembly, SEC16A and SEC16B are each present in multiple copies in a heteromeric complex. Interacts with SEC23A. Interacts with RNF183 and RNF152. Interacts with LRRK2 (via ROC domain). Interacts with SEC13. Interacts with RAB10. Interacts with MIA3. Interacts with GORASP2 in response to ER stress. In terms of tissue distribution, ubiquitous. Expressed at higher levels in the pancreas.

Its subcellular location is the endoplasmic reticulum membrane. It is found in the golgi apparatus membrane. It localises to the cytoplasm. The protein resides in the perinuclear region. The protein localises to the cytosol. Its subcellular location is the microsome membrane. Functionally, acts as a molecular scaffold that plays a key role in the organization of the endoplasmic reticulum exit sites (ERES), also known as transitional endoplasmic reticulum (tER). SAR1A-GTP-dependent assembly of SEC16A on the ER membrane forms an organized scaffold defining an ERES. Required for secretory cargo traffic from the endoplasmic reticulum to the Golgi apparatus. Mediates the recruitment of MIA3/TANGO to ERES. Regulates both conventional (ER/Golgi-dependent) and GORASP2-mediated unconventional (ER/Golgi-independent) trafficking of CFTR to cell membrane. Positively regulates the protein stability of E3 ubiquitin-protein ligases RNF152 and RNF183 and the ER localization of RNF183. Acts as a RAB10 effector in the regulation of insulin-induced SLC2A4/GLUT4 glucose transporter-enriched vesicles delivery to the cell membrane in adipocytes. The sequence is that of Protein transport protein Sec16A (SEC16A) from Homo sapiens (Human).